A 527-amino-acid chain; its full sequence is N-acetylglucosamine-1-phosphodiester alpha-N-acetylglucosaminidase (527 aa).

Residues 1 to 25 (MASSMGRFLLFFIALRGFLLEASGD) form the signal peptide. Residues 26–49 (FGSGASRDDDVLLPYSRARARLAR) constitute a propeptide, removed in mature form. At 50–463 (DCTRVHAGRL…SLLTRTTWLA (414 aa)) the chain is on the lumenal side. Intrachain disulfides connect C116/C149, C133/C324, C308/C315, C363/C374, and C381/C390. N-linked (GlcNAc...) asparagine glycans are attached at residues N209, N215, and N297. One can recognise an EGF-like domain in the interval 359-391 (DKLDCGPANCSQHGLCTETGCRCEAGWTGSNCS). N367, N389, and N421 each carry an N-linked (GlcNAc...) asparagine glycan. A helical transmembrane segment spans residues 464–484 (ITLALAFLLLISTAANVSLFL). Over 485–527 (GSRAARRRHLDGAYVYHPLQEVNGEHPAAEKEQLGDSSNPFKD) the chain is Cytoplasmic. A mediates the interaction with AP4M1 region spans residues 498-505 (YVYHPLQE). The Tyrosine-based internalization motif motif lies at 500-503 (YHPL). The short motif at 523-527 (NPFKD) is the NPF internalization motif element.

Homotetramer arranged as two disulfide-linked homodimers. Interacts with AP4M1. Post-translationally, glycosylated. Contains complex N-linked oligosaccharides with appreciable amounts of sialic acid. The precursor is cleaved and activated in the trans-Golgi network by a furin endopeptidase.

It is found in the golgi apparatus. It localises to the golgi stack membrane. The protein resides in the trans-Golgi network. It carries out the reaction N(4)-[6-(N-acetyl-alpha-D-glucosaminyl-1-phospho)-alpha-D-mannosyl-(1-&gt;2)-alpha-D-mannosyl-(glycan)]-L-asparaginyl-[protein] + H2O = N(4)-[6-phospho-alpha-D-mannosyl-(1-&gt;2)-alpha-D-mannosyl-(glycan)]-L-asparaginyl-[protein] + N-acetyl-D-glucosamine + H(+). Its pathway is protein modification; protein glycosylation. Catalyzes the second step in the formation of the mannose 6-phosphate targeting signal on lysosomal enzyme oligosaccharides by removing GlcNAc residues from GlcNAc-alpha-P-mannose moieties, which are formed in the first step. Also hydrolyzes UDP-GlcNAc, a sugar donor for Golgi N-acetylglucosaminyltransferases. This Bos taurus (Bovine) protein is N-acetylglucosamine-1-phosphodiester alpha-N-acetylglucosaminidase (NAGPA).